The primary structure comprises 256 residues: Probable serine/threonine-protein kinase YbdM (256 aa).

The Protein kinase domain occupies 25–256; sequence YKIEECLGMG…DLNRAIQSVT (232 aa). ATP is bound by residues 31–39 and lysine 54; that span reads LGMGGYGLV. Catalysis depends on aspartate 149, which acts as the Proton acceptor.

It belongs to the protein kinase superfamily. Ser/Thr protein kinase family.

It catalyses the reaction L-seryl-[protein] + ATP = O-phospho-L-seryl-[protein] + ADP + H(+). It carries out the reaction L-threonyl-[protein] + ATP = O-phospho-L-threonyl-[protein] + ADP + H(+). The sequence is that of Probable serine/threonine-protein kinase YbdM (ybdM) from Bacillus subtilis (strain 168).